Consider the following 500-residue polypeptide: Probable cytosol aminopeptidase (500 aa).

Residues Lys-265 and Asp-270 each contribute to the Mn(2+) site. Lys-277 is a catalytic residue. Positions 288, 347, and 349 each coordinate Mn(2+). Residue Arg-351 is part of the active site.

It belongs to the peptidase M17 family. Mn(2+) serves as cofactor.

It is found in the cytoplasm. The enzyme catalyses Release of an N-terminal amino acid, Xaa-|-Yaa-, in which Xaa is preferably Leu, but may be other amino acids including Pro although not Arg or Lys, and Yaa may be Pro. Amino acid amides and methyl esters are also readily hydrolyzed, but rates on arylamides are exceedingly low.. It carries out the reaction Release of an N-terminal amino acid, preferentially leucine, but not glutamic or aspartic acids.. Functionally, presumably involved in the processing and regular turnover of intracellular proteins. Catalyzes the removal of unsubstituted N-terminal amino acids from various peptides. The sequence is that of Probable cytosol aminopeptidase from Rickettsia massiliae (strain Mtu5).